The chain runs to 265 residues: Tryptophan synthase alpha chain (265 aa).

Active-site proton acceptor residues include Glu48 and Asp59.

Belongs to the TrpA family. As to quaternary structure, tetramer of two alpha and two beta chains.

It catalyses the reaction (1S,2R)-1-C-(indol-3-yl)glycerol 3-phosphate + L-serine = D-glyceraldehyde 3-phosphate + L-tryptophan + H2O. Its pathway is amino-acid biosynthesis; L-tryptophan biosynthesis; L-tryptophan from chorismate: step 5/5. Functionally, the alpha subunit is responsible for the aldol cleavage of indoleglycerol phosphate to indole and glyceraldehyde 3-phosphate. The sequence is that of Tryptophan synthase alpha chain from Vesicomyosocius okutanii subsp. Calyptogena okutanii (strain HA).